Reading from the N-terminus, the 197-residue chain is Dephospho-CoA kinase (197 aa).

The DPCK domain maps to 2–197; it reads IIGITGGIAS…SALLSLANPR (196 aa). 10-15 contacts ATP; the sequence is ASGKST.

It belongs to the CoaE family.

The protein resides in the cytoplasm. It carries out the reaction 3'-dephospho-CoA + ATP = ADP + CoA + H(+). It participates in cofactor biosynthesis; coenzyme A biosynthesis; CoA from (R)-pantothenate: step 5/5. Its function is as follows. Catalyzes the phosphorylation of the 3'-hydroxyl group of dephosphocoenzyme A to form coenzyme A. The sequence is that of Dephospho-CoA kinase from Streptococcus pyogenes serotype M3 (strain ATCC BAA-595 / MGAS315).